We begin with the raw amino-acid sequence, 905 residues long: Alanine--tRNA ligase (905 aa).

Residues His-569, His-573, Cys-693, and His-697 each coordinate Zn(2+).

This sequence belongs to the class-II aminoacyl-tRNA synthetase family. Zn(2+) serves as cofactor.

The protein resides in the cytoplasm. The catalysed reaction is tRNA(Ala) + L-alanine + ATP = L-alanyl-tRNA(Ala) + AMP + diphosphate. Functionally, catalyzes the attachment of alanine to tRNA(Ala) in a two-step reaction: alanine is first activated by ATP to form Ala-AMP and then transferred to the acceptor end of tRNA(Ala). Also edits incorrectly charged Ser-tRNA(Ala) and Gly-tRNA(Ala) via its editing domain. The protein is Alanine--tRNA ligase of Roseiflexus sp. (strain RS-1).